A 501-amino-acid polypeptide reads, in one-letter code: Pentatricopeptide repeat-containing protein At4g14190, chloroplastic (501 aa).

Residues 1-88 (MENLTTAQFL…SGSCPLRLLQ (88 aa)) constitute a chloroplast transit peptide. 5 PPR repeats span residues 130-160 (SENN…MIDD), 166-200 (SLEI…GLLP), 201-235 (ITET…GCVR), 236-270 (DHVT…KMTL), and 271-305 (EPST…GISL).

The protein belongs to the PPR family. P subfamily.

The protein resides in the plastid. Its subcellular location is the chloroplast. This chain is Pentatricopeptide repeat-containing protein At4g14190, chloroplastic, found in Arabidopsis thaliana (Mouse-ear cress).